Consider the following 859-residue polypeptide: Probable helicase A859L (859 aa).

A Helicase ATP-binding domain is found at 178–349 (YQELQRSGRA…KNRDLFGGVA (172 aa)). An ATP-binding site is contributed by 191 to 198 (MACRCGKT). The DEAH box signature appears at 298-301 (DECH). In terms of domain architecture, Helicase C-terminal spans 394–553 (QIIMALAYLK…RFYEHLLNPS (160 aa)).

The protein belongs to the asfivirus helicase A859L family.

This Ornithodoros (relapsing fever ticks) protein is Probable helicase A859L.